Reading from the N-terminus, the 204-residue chain is Proteasome subunit beta (204 aa).

Positions 1–8 are cleaved as a propeptide — removed in mature form; by autocatalysis; that stretch reads MDDKILEG. T9 functions as the Nucleophile in the catalytic mechanism.

It belongs to the peptidase T1B family. The 20S proteasome core is composed of 14 alpha and 14 beta subunits that assemble into four stacked heptameric rings, resulting in a barrel-shaped structure. The two inner rings, each composed of seven catalytic beta subunits, are sandwiched by two outer rings, each composed of seven alpha subunits. The catalytic chamber with the active sites is on the inside of the barrel. Has a gated structure, the ends of the cylinder being occluded by the N-termini of the alpha-subunits. Is capped at one or both ends by the proteasome regulatory ATPase, PAN.

Its subcellular location is the cytoplasm. It catalyses the reaction Cleavage of peptide bonds with very broad specificity.. With respect to regulation, the formation of the proteasomal ATPase PAN-20S proteasome complex, via the docking of the C-termini of PAN into the intersubunit pockets in the alpha-rings, triggers opening of the gate for substrate entry. Interconversion between the open-gate and close-gate conformations leads to a dynamic regulation of the 20S proteasome proteolysis activity. Functionally, component of the proteasome core, a large protease complex with broad specificity involved in protein degradation. This is Proteasome subunit beta from Methanobrevibacter smithii (strain ATCC 35061 / DSM 861 / OCM 144 / PS).